Here is a 335-residue protein sequence, read N- to C-terminus: Magnesium-protoporphyrin IX monomethyl ester [oxidative] cyclase (335 aa).

Belongs to the AcsF family. Requires Fe cation as cofactor.

It localises to the plastid. It is found in the chloroplast. It carries out the reaction Mg-protoporphyrin IX 13-monomethyl ester + 3 NADPH + 3 O2 + 2 H(+) = 3,8-divinyl protochlorophyllide a + 3 NADP(+) + 5 H2O. It participates in porphyrin-containing compound metabolism; chlorophyll biosynthesis (light-independent). In terms of biological role, catalyzes the formation of the isocyclic ring in chlorophyll biosynthesis. Mediates the cyclase reaction, which results in the formation of divinylprotochlorophyllide (Pchlide) characteristic of all chlorophylls from magnesium-protoporphyrin IX 13-monomethyl ester (MgPMME). The chain is Magnesium-protoporphyrin IX monomethyl ester [oxidative] cyclase from Cyanidioschyzon merolae (strain NIES-3377 / 10D) (Unicellular red alga).